A 328-amino-acid polypeptide reads, in one-letter code: MNSETISAQAPATLTIASRESRLAMWQAEHVRDALRKLYPACDVKILGMTTRGDQILDRTLSKVGGKGLFVKELENALADGRADLAVHSLKDVPMALPDGFALTAIMEREDPRDAFVSNDYASLDALPAGAVVGTSSLRREAMLRARYPHLDVLPLRGNLDTRLAKLDRGDYAAIILAAAGLKRLGLEARIRTLIDVEDSPPAAGQGALGIEIATHRTDVAAWLAPLHDPRTALAVEAERMVSRALGGSCEVPLAAHAVWRAGELYLTGRVSTTDGQRVLTAEECGAVMTVADALALGRAVSDELEAQGALDIVNALLAASQAGKGDA.

S-(dipyrrolylmethanemethyl)cysteine is present on Cys-250.

It belongs to the HMBS family. In terms of assembly, monomer. Dipyrromethane is required as a cofactor.

It carries out the reaction 4 porphobilinogen + H2O = hydroxymethylbilane + 4 NH4(+). It participates in porphyrin-containing compound metabolism; protoporphyrin-IX biosynthesis; coproporphyrinogen-III from 5-aminolevulinate: step 2/4. Functionally, tetrapolymerization of the monopyrrole PBG into the hydroxymethylbilane pre-uroporphyrinogen in several discrete steps. The chain is Porphobilinogen deaminase from Burkholderia ambifaria (strain ATCC BAA-244 / DSM 16087 / CCUG 44356 / LMG 19182 / AMMD) (Burkholderia cepacia (strain AMMD)).